We begin with the raw amino-acid sequence, 651 residues long: Cysteine-rich receptor-like protein kinase 42 (651 aa).

The signal sequence occupies residues 1–28; the sequence is MRCLTKTRSFHYVIIFYSFFFLPFLSSS. Residues 29 to 251 lie on the Extracellular side of the membrane; the sequence is SDDQRTTVSG…HHKFHVLFNK (223 aa). 2 Gnk2-homologous domains span residues 35 to 135 and 137 to 236; these read TVSG…TYEF and DESV…DHKF. Residues Asn79 and Asn151 are each glycosylated (N-linked (GlcNAc...) asparagine). A helical transmembrane segment spans residues 252-272; sequence GVIVAIVLTTSAFVMLILLAT. Residues 273-651 are Cytoplasmic-facing; sequence YVIMTKVSKT…SSESSTTRTI (379 aa). Residues 315–604 form the Protein kinase domain; sequence FSHKKMLGQG…IPSPTSPPFL (290 aa). Residues 321–329 and Lys343 contribute to the ATP site; that span reads LGQGGNGTV. Position 388 is a phosphotyrosine (Tyr388). Asp440 (proton acceptor) is an active-site residue. A phosphoserine mark is found at Ser444 and Ser473. Thr474 and Thr479 each carry phosphothreonine. Tyr487 is modified (phosphotyrosine).

This sequence belongs to the protein kinase superfamily. Ser/Thr protein kinase family. CRK subfamily.

Its subcellular location is the membrane. It carries out the reaction L-seryl-[protein] + ATP = O-phospho-L-seryl-[protein] + ADP + H(+). The enzyme catalyses L-threonyl-[protein] + ATP = O-phospho-L-threonyl-[protein] + ADP + H(+). This is Cysteine-rich receptor-like protein kinase 42 (CRK42) from Arabidopsis thaliana (Mouse-ear cress).